Here is a 236-residue protein sequence, read N- to C-terminus: 3-deoxy-D-manno-octulosonic acid kinase (236 aa).

Residue Asp167 is part of the active site.

Belongs to the protein kinase superfamily. KdkA/RfaP family.

It localises to the cell inner membrane. It catalyses the reaction an alpha-Kdo-(2-&gt;6)-lipid IVA + ATP = a 4-O-phospho-alpha-Kdo-(2-&gt;6)-lipid IVA + ADP + H(+). It functions in the pathway bacterial outer membrane biogenesis; LPS core biosynthesis. In terms of biological role, catalyzes the ATP-dependent phosphorylation of the 3-deoxy-D-manno-octulosonic acid (Kdo) residue in Kdo-lipid IV(A) at the 4-OH position. The protein is 3-deoxy-D-manno-octulosonic acid kinase of Vibrio vulnificus (strain CMCP6).